A 238-amino-acid polypeptide reads, in one-letter code: Ribonuclease PH (238 aa).

Phosphate-binding positions include R86 and G124–R126.

Belongs to the RNase PH family. As to quaternary structure, homohexameric ring arranged as a trimer of dimers.

The enzyme catalyses tRNA(n+1) + phosphate = tRNA(n) + a ribonucleoside 5'-diphosphate. Its function is as follows. Phosphorolytic 3'-5' exoribonuclease that plays an important role in tRNA 3'-end maturation. Removes nucleotide residues following the 3'-CCA terminus of tRNAs; can also add nucleotides to the ends of RNA molecules by using nucleoside diphosphates as substrates, but this may not be physiologically important. Probably plays a role in initiation of 16S rRNA degradation (leading to ribosome degradation) during starvation. This chain is Ribonuclease PH, found in Dichelobacter nodosus (strain VCS1703A).